Here is a 32-residue protein sequence, read N- to C-terminus: Glutathione S-transferase 8.2 (32 aa).

Q21 to S22 provides a ligand contact to glutathione.

This sequence belongs to the GST superfamily. Alpha family. Homodimer. In terms of processing, the N-terminus is blocked.

It is found in the cytoplasm. It catalyses the reaction RX + glutathione = an S-substituted glutathione + a halide anion + H(+). Its function is as follows. Conjugation of reduced glutathione to a wide number of exogenous and endogenous hydrophobic electrophiles. This Dicentrarchus labrax (European seabass) protein is Glutathione S-transferase 8.2.